Here is a 387-residue protein sequence, read N- to C-terminus: Phosphoglycerate kinase (387 aa).

Substrate contacts are provided by residues 21–23, R36, 59–62, R113, and R146; these read DLN and HLGR. ATP-binding positions include K197, E314, and 340-343; that span reads GGDT.

The protein belongs to the phosphoglycerate kinase family. In terms of assembly, monomer.

Its subcellular location is the cytoplasm. It carries out the reaction (2R)-3-phosphoglycerate + ATP = (2R)-3-phospho-glyceroyl phosphate + ADP. It participates in carbohydrate degradation; glycolysis; pyruvate from D-glyceraldehyde 3-phosphate: step 2/5. The protein is Phosphoglycerate kinase of Proteus mirabilis (strain HI4320).